We begin with the raw amino-acid sequence, 333 residues long: PRKC apoptosis WT1 regulator protein (333 aa).

Composition is skewed to low complexity over residues 1-14, 33-51, 66-80, and 105-116; these read MATG…STTT, PAGP…PAGS, GPAG…APGA, and PSAAAASGAPGS. Residues 1 to 262 form a disordered region; sequence MATGGYRSGG…ASFSSSSTLE (262 aa). Residues 62 to 66 carry the B30.2/SPRY domain-binding motif motif; the sequence is ELNHG. A Nuclear localization signal motif is present at residues 138–154; it reads RKGKGQIEKRKLREKRR. Residues 138–196 are selective for apoptosis induction in cancer cells (SAC); the sequence is RKGKGQIEKRKLREKRRSTGVVNIPAAECLDEYEDDEAGQKERKREDAITQQNTIQNEA. Residue T156 is modified to Phosphothreonine; by PKA. Residues 175 to 185 are compositionally biased toward basic and acidic residues; sequence AGQKERKREDA. A compositionally biased stretch (polar residues) spans 186–196; sequence ITQQNTIQNEA. S224 carries the phosphoserine modification. The segment covering 235-248 has biased composition (basic and acidic residues); the sequence is PRTDRSGFSRHNRD. The stretch at 255–333 forms a coiled coil; the sequence is FSSSSTLEKR…LLKVVGQLTR (79 aa). Residues 293-333 are leucine-zipper; sequence IGKLKEEIDLLNRDLDDMEDENEQLKQENKTLLKVVGQLTR.

As to quaternary structure, homooligomer. Interacts (via the C-terminal region) with WT1. Interacts with THAP1. Interacts with AATF. Interacts with BACE1. Interacts with SPSB1 (via B30.2/SPRY domain); this interaction is direct and occurs in association with the Elongin BC complex. Interacts with SPSB2 (via B30.2/SPRY domain); this interaction occurs in association with the Elongin BC complex. Interacts with SPSB4 (via B30.2/SPRY domain); this interaction occurs in association with the Elongin BC complex. Component of a ternary complex composed of SQSTM1 and PRKCZ. Interacts with actin. Preferentially phosphorylated at the Thr-156 by PKC in cancer cells.

The protein resides in the cytoplasm. Its subcellular location is the nucleus. Functionally, pro-apoptotic protein capable of selectively inducing apoptosis in cancer cells, sensitizing the cells to diverse apoptotic stimuli and causing regression of tumors in animal models. Induces apoptosis in certain cancer cells by activation of the Fas prodeath pathway and coparallel inhibition of NF-kappa-B transcriptional activity. Inhibits the transcriptional activation and augments the transcriptional repression mediated by WT1. Down-regulates the anti-apoptotic protein BCL2 via its interaction with WT1. Also seems to be a transcriptional repressor by itself. May be directly involved in regulating the amyloid precursor protein (APP) cleavage activity of BACE1. This is PRKC apoptosis WT1 regulator protein (Pawr) from Mus musculus (Mouse).